Here is a 354-residue protein sequence, read N- to C-terminus: DNA polymerase IV (354 aa).

Residues 6–187 (IIHIDCDCFY…LPVARLHGVG (182 aa)) form the UmuC domain. Residues aspartate 10 and aspartate 105 each contribute to the Mg(2+) site. Glutamate 106 is an active-site residue.

This sequence belongs to the DNA polymerase type-Y family. In terms of assembly, monomer. Mg(2+) serves as cofactor.

Its subcellular location is the cytoplasm. It carries out the reaction DNA(n) + a 2'-deoxyribonucleoside 5'-triphosphate = DNA(n+1) + diphosphate. Poorly processive, error-prone DNA polymerase involved in untargeted mutagenesis. Copies undamaged DNA at stalled replication forks, which arise in vivo from mismatched or misaligned primer ends. These misaligned primers can be extended by PolIV. Exhibits no 3'-5' exonuclease (proofreading) activity. May be involved in translesional synthesis, in conjunction with the beta clamp from PolIII. This Pseudomonas entomophila (strain L48) protein is DNA polymerase IV.